We begin with the raw amino-acid sequence, 423 residues long: CinA-like protein (423 aa).

Belongs to the CinA family.

This chain is CinA-like protein, found in Chlorobium chlorochromatii (strain CaD3).